The primary structure comprises 186 residues: ATP-dependent protease subunit HslV (186 aa).

Thr14 is an active-site residue. Positions 168, 171, and 174 each coordinate Na(+).

The protein belongs to the peptidase T1B family. HslV subfamily. As to quaternary structure, a double ring-shaped homohexamer of HslV is capped on each side by a ring-shaped HslU homohexamer. The assembly of the HslU/HslV complex is dependent on binding of ATP.

It localises to the cytoplasm. The catalysed reaction is ATP-dependent cleavage of peptide bonds with broad specificity.. Allosterically activated by HslU binding. Functionally, protease subunit of a proteasome-like degradation complex believed to be a general protein degrading machinery. The polypeptide is ATP-dependent protease subunit HslV (Bradyrhizobium sp. (strain BTAi1 / ATCC BAA-1182)).